A 253-amino-acid polypeptide reads, in one-letter code: Proteasome subunit alpha (253 aa).

Residues 229-253 form a disordered region; sequence ADESQSYIDDIEDAADDSDDDDDEE. Positions 237 to 253 are enriched in acidic residues; the sequence is DDIEDAADDSDDDDDEE.

It belongs to the peptidase T1A family. The 20S proteasome core is composed of 14 alpha and 14 beta subunits that assemble into four stacked heptameric rings, resulting in a barrel-shaped structure. The two inner rings, each composed of seven catalytic beta subunits, are sandwiched by two outer rings, each composed of seven alpha subunits. The catalytic chamber with the active sites is on the inside of the barrel. Has a gated structure, the ends of the cylinder being occluded by the N-termini of the alpha-subunits. Is capped at one or both ends by the proteasome regulatory ATPase, PAN.

It localises to the cytoplasm. The formation of the proteasomal ATPase PAN-20S proteasome complex, via the docking of the C-termini of PAN into the intersubunit pockets in the alpha-rings, triggers opening of the gate for substrate entry. Interconversion between the open-gate and close-gate conformations leads to a dynamic regulation of the 20S proteasome proteolysis activity. Its function is as follows. Component of the proteasome core, a large protease complex with broad specificity involved in protein degradation. This Halobacterium salinarum (strain ATCC 29341 / DSM 671 / R1) protein is Proteasome subunit alpha.